A 393-amino-acid polypeptide reads, in one-letter code: S-adenosylmethionine synthase (393 aa).

Mg(2+) is bound at residue E9. H15 contacts ATP. E43 lines the K(+) pocket. Residues E56 and Q99 each contribute to the L-methionine site. ATP is bound by residues 167–169 (HGK), 235–238 (SGRF), D246, 252–253 (RK), A269, K273, and K277. D246 is an L-methionine binding site. An L-methionine-binding site is contributed by K277.

Belongs to the AdoMet synthase family. Homotetramer. Requires Mn(2+) as cofactor. The cofactor is Mg(2+). It depends on Co(2+) as a cofactor. K(+) serves as cofactor. Root.

Its subcellular location is the cytoplasm. It catalyses the reaction L-methionine + ATP + H2O = S-adenosyl-L-methionine + phosphate + diphosphate. The protein operates within amino-acid biosynthesis; S-adenosyl-L-methionine biosynthesis; S-adenosyl-L-methionine from L-methionine: step 1/1. Catalyzes the formation of S-adenosylmethionine from methionine and ATP. The reaction comprises two steps that are both catalyzed by the same enzyme: formation of S-adenosylmethionine (AdoMet) and triphosphate, and subsequent hydrolysis of the triphosphate. This is S-adenosylmethionine synthase (METK) from Pinus banksiana (Jack pine).